Consider the following 588-residue polypeptide: Vesicular glutamate transporter 3 (588 aa).

The Cytoplasmic segment spans residues 1–76; it reads MPFNAFDTFK…CSCCGIPKRY (76 aa). A helical transmembrane segment spans residues 77-97; the sequence is IIAVMSGLGFCISFGIRCNLG. Residues 98-130 lie on the Vesicular side of the membrane; that stretch reads VAIVEMVNNSTVYVDGKPEIQTAQFNWDPETVG. A glycan (N-linked (GlcNAc...) asparagine) is linked at Asn-106. The chain crosses the membrane as a helical span at residues 131–151; it reads LIHGSFFWGYIVTQIPGGFIS. The Cytoplasmic portion of the chain corresponds to 152 to 153; it reads NK. The helical transmembrane segment at 154–174 threads the bilayer; the sequence is FAANRVFGAAIFLTSTLNMFI. At 175 to 182 the chain is on the vesicular side; the sequence is PSAARVHY. The chain crosses the membrane as a helical span at residues 183–203; sequence GCVMCVRILQGLVEGVTYPAC. Over 204-221 the chain is Cytoplasmic; it reads HGMWSKWAPPLERSRLAT. Residues 222-242 traverse the membrane as a helical segment; it reads TSFCGSYAGAVVAMPLAGVLV. At 243–249 the chain is on the vesicular side; sequence QYIGWAS. A helical membrane pass occupies residues 250–270; the sequence is VFYIYGMFGIIWYMFWLLQAY. Residues 271–314 lie on the Cytoplasmic side of the membrane; sequence ECPAVHPTISNEERTYIETSIGEGANLASLSKFNTPWRRFFTSL. A helical transmembrane segment spans residues 315 to 335; sequence PVYAIIVANFCRSWTFYLLLI. At 336 to 353 the chain is on the vesicular side; it reads SQPAYFEEVFGFAISKVG. The helical transmembrane segment at 354-374 threads the bilayer; sequence LLSAVPHMVMTIVVPIGGQLA. Over 375-390 the chain is Cytoplasmic; that stretch reads DYLRSRKILTTTAVRK. A helical membrane pass occupies residues 391-411; the sequence is IMNCGGFGMEATLLLVVGFSH. The Vesicular portion of the chain corresponds to 412–413; that stretch reads TK. The helical transmembrane segment at 414 to 434 threads the bilayer; it reads GVAISFLVLAVGFSGFAISGF. Residues 435–447 are Cytoplasmic-facing; it reads NVNHLDIAPRYAS. The helical transmembrane segment at 448–468 threads the bilayer; that stretch reads ILMGISNGVGTLSGMVCPLIV. Over 469–481 the chain is Vesicular; that stretch reads GAMTKHKTREEWQ. Residues 482–502 traverse the membrane as a helical segment; the sequence is NVFLIAALVHYSGVIFYGVFA. At 503 to 585 the chain is on the cytoplasmic side; it reads SGEKQDWADP…LSYQNEEDFS (83 aa). The tract at residues 539-588 is disordered; the sequence is FVSPRKKMSYGATTQNCEVQKTDRRQQRESAFEGEEPLSYQNEEDFSETS. A compositionally biased stretch (basic and acidic residues) spans 558–569; it reads QKTDRRQQRESA. Residues 570-588 are compositionally biased toward acidic residues; the sequence is FEGEEPLSYQNEEDFSETS.

This sequence belongs to the major facilitator superfamily. Sodium/anion cotransporter family. VGLUT subfamily. Expressed in brain, kidney and liver. Expressed within the amygdala, brainstem, cerberal cortex, dorsal root ganglia, dorsal spinal cord, hippocampus, hypothalamus, retina, striatum and ventral spinal cord. Expressed within neurons of the caudate-putamen, olfactory tubercle, nucleus accumbens, hippocampus, interpeduncular nucleus and dorsal and medial raphe nuclei. Expressed in inner hair cells of the ear. Expressed at synaptic terminals within the lateral superior olive (LSO), a nucleus of the mammalian sound localization system, and in the medial nucleus of the trapezoid body (MNTB), which provides inhibitory input to the LSO.

The protein localises to the cytoplasmic vesicle. Its subcellular location is the secretory vesicle. The protein resides in the synaptic vesicle membrane. It is found in the cell membrane. It localises to the synapse. The protein localises to the synaptosome. The catalysed reaction is L-glutamate(out) = L-glutamate(in). The enzyme catalyses chloride(in) = chloride(out). It carries out the reaction 3 Na(+)(out) + phosphate(out) = 3 Na(+)(in) + phosphate(in). The L-glutamate uniporter activity exhibits a biphasic dependence on chloride concentration. Chloride channel activity is allosterically activated by lumenal H(+) and Cl(-) leading to synaptic vesicles acidification. The glutamate transport activity is allosterically activated by lumenal H(+) and Cl(-), preventing non-vesicular L-glutamate release. Its function is as follows. Multifunctional transporter that transports L-glutamate as well as multiple ions such as chloride, sodium and phosphate. At the synaptic vesicle membrane, mainly functions as an uniporter that mediates the uptake of L-glutamate into synaptic vesicles at presynaptic nerve terminals of excitatory neural cells. The L-glutamate uniporter activity is electrogenic and is driven by the proton electrochemical gradient, mainly by the electrical gradient established by the vacuolar H(+)-ATPase across the synaptic vesicle membrane. In addition, functions as a chloride channel that allows a chloride permeation through the synaptic vesicle membrane that affects the proton electrochemical gradient and promotes synaptic vesicles acidification. At the plasma membrane, following exocytosis, functions as a symporter of Na(+) and phosphate from the extracellular space to the cytoplasm allowing synaptic phosphate homeostasis regulation. The symporter activity is electrogenic. Moreover, operates synergistically with SLC18A3/VACHT under a constant H(+) gradient, thereby allowing striatal vesicular acetylcholine uptake. The polypeptide is Vesicular glutamate transporter 3 (Rattus norvegicus (Rat)).